The chain runs to 438 residues: Na(+)/H(+) antiporter NhaA (438 aa).

Transmembrane regions (helical) follow at residues Phe23 to Leu43, Phe62 to Leu82, Ser104 to Leu124, Gly133 to Gly153, Val162 to Phe182, Thr185 to Leu205, Val221 to Leu241, Phe302 to Val322, Leu337 to Ile357, Trp372 to Ile392, and Ile410 to Leu430.

It belongs to the NhaA Na(+)/H(+) (TC 2.A.33) antiporter family.

It is found in the cell inner membrane. It catalyses the reaction Na(+)(in) + 2 H(+)(out) = Na(+)(out) + 2 H(+)(in). Its function is as follows. Na(+)/H(+) antiporter that extrudes sodium in exchange for external protons. This is Na(+)/H(+) antiporter NhaA from Helicobacter pylori (strain HPAG1).